The sequence spans 105 residues: uncharacterized protein (105 aa).

This is an uncharacterized protein from Mycobacterium bovis (strain ATCC BAA-935 / AF2122/97).